The following is a 1346-amino-acid chain: G-protein coupled receptor-associated sorting protein 1 (1346 aa).

Disordered regions lie at residues 1 to 101, 144 to 177, and 192 to 258; these read MTGA…FRGE, TESIPKKASSPARFQPSFGPEEGTSMGSWYRPRP, and ADKS…SAKT. Residues 21–36 show a composition bias toward low complexity; the sequence is ENANAAEVEPEVPLVV. A compositionally biased stretch (basic residues) spans 211–226; it reads FRPRKSMKSNTRFRHM. Ser295 carries the post-translational modification Phosphoserine. Disordered stretches follow at residues 311-399 and 461-485; these read EEAK…RPEE and VSSFCLGSGKKTSMESGPKATSKSM. Over residues 316-333 the composition is skewed to basic residues; the sequence is RSKPRARKGVNMRARHQA. Composition is skewed to basic and acidic residues over residues 347-361 and 370-399; these read DKNKKDSWFLPEEKA and KKEPRTRAMPREEVKTKARASTKQEARPEE. Positions 461-484 are enriched in polar residues; it reads VSSFCLGSGKKTSMESGPKATSKS. 2 positions are modified to phosphoserine: Ser619 and Ser626. The residue at position 860 (Thr860) is a Phosphothreonine. Position 862 is a phosphoserine (Ser862). Positions 984–1004 are disordered; sequence ACEPESSTEHEPDPSRRPQSW. A compositionally biased stretch (basic and acidic residues) spans 990–1003; it reads STEHEPDPSRRPQS.

It belongs to the GPRASP family. As to quaternary structure, interacts with cytoplasmic tails of a variety of G-protein coupled receptors such as delta opioid receptor/OPRD1, beta-2 adrenergic receptor/ADRB2 and D4 dopamine receptor/DRD4. Interacts with BECN2; the interaction is direct and with D2 dopamine receptor/DRD2. Interacts with PER1. Expressed in the brain.

It localises to the cytoplasm. Functionally, modulates lysosomal sorting and functional down-regulation of a variety of G-protein coupled receptors. Targets receptors for degradation in lysosomes via its interaction with BECN2. This is G-protein coupled receptor-associated sorting protein 1 (Gprasp1) from Rattus norvegicus (Rat).